Reading from the N-terminus, the 314-residue chain is MPDMKLFAGNATPELAQRIADRLYISLGDASVSRFSDGEVAVQINENVRGSDVFIIQSTCAPTNDNLMELVVMIDAMRRASAGRITAVIPYFGYARQDRRVRSARVPITAKVVADFLSNVGVDRVLTIDLHAEQIQGFFDVPVDNIFGTPVLLEDMQSRGLDNPVVVSPDLGGVVRARATAKALGDIDIAIVDKRRPRANVSEVMNLIGDVEGRDCVIVDDMIDTGGTLCKAAEALKERGAKRVFAYATHAVFSGNAADNIKNSVLDQVIVTDSISLSKEMAATGKVTTLSLSRMLAEAIRRISNEESISAMFN.

ATP contacts are provided by residues 37–39 (DGE) and 96–97 (RQ). Positions 131 and 170 each coordinate Mg(2+). The active site involves lysine 194. D-ribose 5-phosphate contacts are provided by residues arginine 196, aspartate 220, and 224–228 (DTGGT).

The protein belongs to the ribose-phosphate pyrophosphokinase family. Class I subfamily. As to quaternary structure, homohexamer. Requires Mg(2+) as cofactor.

Its subcellular location is the cytoplasm. It catalyses the reaction D-ribose 5-phosphate + ATP = 5-phospho-alpha-D-ribose 1-diphosphate + AMP + H(+). It functions in the pathway metabolic intermediate biosynthesis; 5-phospho-alpha-D-ribose 1-diphosphate biosynthesis; 5-phospho-alpha-D-ribose 1-diphosphate from D-ribose 5-phosphate (route I): step 1/1. In terms of biological role, involved in the biosynthesis of the central metabolite phospho-alpha-D-ribosyl-1-pyrophosphate (PRPP) via the transfer of pyrophosphoryl group from ATP to 1-hydroxyl of ribose-5-phosphate (Rib-5-P). This Vibrio parahaemolyticus serotype O3:K6 (strain RIMD 2210633) protein is Ribose-phosphate pyrophosphokinase.